The chain runs to 264 residues: S-adenosylmethionine decarboxylase proenzyme (264 aa).

Catalysis depends on S112, which acts as the Schiff-base intermediate with substrate; via pyruvic acid. S112 is modified (pyruvic acid (Ser); by autocatalysis). The active-site Proton acceptor; for processing activity is the H117. Residue C140 is the Proton donor; for catalytic activity of the active site.

This sequence belongs to the prokaryotic AdoMetDC family. Type 2 subfamily. Heterooctamer of four alpha and four beta chains arranged as a tetramer of alpha/beta heterodimers. It depends on pyruvate as a cofactor. Is synthesized initially as an inactive proenzyme. Formation of the active enzyme involves a self-maturation process in which the active site pyruvoyl group is generated from an internal serine residue via an autocatalytic post-translational modification. Two non-identical subunits are generated from the proenzyme in this reaction, and the pyruvate is formed at the N-terminus of the alpha chain, which is derived from the carboxyl end of the proenzyme. The post-translation cleavage follows an unusual pathway, termed non-hydrolytic serinolysis, in which the side chain hydroxyl group of the serine supplies its oxygen atom to form the C-terminus of the beta chain, while the remainder of the serine residue undergoes an oxidative deamination to produce ammonia and the pyruvoyl group blocking the N-terminus of the alpha chain.

The enzyme catalyses S-adenosyl-L-methionine + H(+) = S-adenosyl 3-(methylsulfanyl)propylamine + CO2. Its pathway is amine and polyamine biosynthesis; S-adenosylmethioninamine biosynthesis; S-adenosylmethioninamine from S-adenosyl-L-methionine: step 1/1. Its function is as follows. Catalyzes the decarboxylation of S-adenosylmethionine to S-adenosylmethioninamine (dcAdoMet), the propylamine donor required for the synthesis of the polyamines spermine and spermidine from the diamine putrescine. The sequence is that of S-adenosylmethionine decarboxylase proenzyme from Salmonella arizonae (strain ATCC BAA-731 / CDC346-86 / RSK2980).